Consider the following 91-residue polypeptide: Putative pterin-4-alpha-carbinolamine dehydratase (91 aa).

It belongs to the pterin-4-alpha-carbinolamine dehydratase family.

The catalysed reaction is (4aS,6R)-4a-hydroxy-L-erythro-5,6,7,8-tetrahydrobiopterin = (6R)-L-erythro-6,7-dihydrobiopterin + H2O. In Sulfolobus acidocaldarius (strain ATCC 33909 / DSM 639 / JCM 8929 / NBRC 15157 / NCIMB 11770), this protein is Putative pterin-4-alpha-carbinolamine dehydratase.